Here is a 208-residue protein sequence, read N- to C-terminus: MSKYIGPDCRLCRREGMKLFLKGDRCYTEKCAFAKRPYPPGQHGQERKKLSEYGMQLREKQKVKRIYGVLETQFRRYFEMAEKMKGIAGENLLSLLERRLDNVVYRLGFASSRGEARVLVSHAHFKVNGKTVNIPSYLVDVGDVIEVKEKSKSKPRFIEIKEKYAKRPSPKWLEKDAENLVGKVIALPTREDIDMPIKEHLIVELYSK.

Residues 98 to 163 enclose the S4 RNA-binding domain; sequence RRLDNVVYRL…KPRFIEIKEK (66 aa).

Belongs to the universal ribosomal protein uS4 family. Part of the 30S ribosomal subunit. Contacts protein S5. The interaction surface between S4 and S5 is involved in control of translational fidelity.

One of the primary rRNA binding proteins, it binds directly to 16S rRNA where it nucleates assembly of the body of the 30S subunit. In terms of biological role, with S5 and S12 plays an important role in translational accuracy. This Caldicellulosiruptor saccharolyticus (strain ATCC 43494 / DSM 8903 / Tp8T 6331) protein is Small ribosomal subunit protein uS4.